We begin with the raw amino-acid sequence, 229 residues long: MNRIFGYGNKKSHDQLLQESNQSMNQAQQSLSNRISQLDTQIAQLNFQLQNIQKNLQRSNNKQPSLRKQALKILNKRKQLENMKDSLDSQSWSMTQAQLTNDNLQNTMITINALKQTNNAMKAQYGKINIDKLQDMQDEMLDLIEQGDELQEVLAMNNNSGELDDISDAELDAELDALAQEDFTLPTSENSLGNDMPSYLLGANAPPAFIDEEPNLDTEDKNKALESAQ.

Residues Asn-9–Ala-155 are a coiled coil. The residue at position 12 (Ser-12) is a Phosphoserine. The interaction with VTA1 stretch occupies residues Ile-128–Asn-159. The interval Pro-186–Gln-229 is disordered. Over residues Thr-218–Gln-229 the composition is skewed to basic and acidic residues.

The protein belongs to the SNF7 family. Interacts with VTA1; the interaction occurs at he endosomal membrane.

It is found in the endosome membrane. It localises to the vacuole membrane. In terms of biological role, has a role in a late stage of multivesicular body (MVB) formation. Can stimulate VPS4 ATPase activity via VTA1. The sequence is that of Vacuolar protein-sorting-associated protein 60 (VPS60) from Saccharomyces cerevisiae (strain ATCC 204508 / S288c) (Baker's yeast).